A 138-amino-acid polypeptide reads, in one-letter code: Basic phospholipase A2 Pla2Vb (138 aa).

The signal sequence occupies residues 1 to 16; the sequence is MRTLWIVAVWLMGVEG. Intrachain disulfides connect Cys42-Cys131, Cys44-Cys60, Cys59-Cys111, Cys65-Cys138, Cys66-Cys104, Cys73-Cys97, and Cys91-Cys102. Residues Tyr43, Gly45, and Gly47 each contribute to the Ca(2+) site. His63 is a catalytic residue. Asp64 lines the Ca(2+) pocket. Residue Asp105 is part of the active site.

It belongs to the phospholipase A2 family. Group II subfamily. D49 sub-subfamily. Ca(2+) serves as cofactor. In terms of tissue distribution, expressed by the venom gland.

The protein resides in the secreted. The enzyme catalyses a 1,2-diacyl-sn-glycero-3-phosphocholine + H2O = a 1-acyl-sn-glycero-3-phosphocholine + a fatty acid + H(+). Snake venom phospholipase A2 (PLA2) that exhibits medium anticoagulant effects by binding to factor Xa (F10) and inhibiting the prothrombinase activity (IC(50) is 90 nM). PLA2 catalyzes the calcium-dependent hydrolysis of the 2-acyl groups in 3-sn-phosphoglycerides. This chain is Basic phospholipase A2 Pla2Vb, found in Vipera berus berus (Common viper).